The following is a 146-amino-acid chain: Large ribosomal subunit protein eL32 (146 aa).

Belongs to the eukaryotic ribosomal protein eL32 family.

The polypeptide is Large ribosomal subunit protein eL32 (rpl32e) (Methanocaldococcus jannaschii (strain ATCC 43067 / DSM 2661 / JAL-1 / JCM 10045 / NBRC 100440) (Methanococcus jannaschii)).